The following is a 365-amino-acid chain: Succinyl-diaminopimelate desuccinylase (365 aa).

His-64 is a binding site for Zn(2+). Asp-66 is an active-site residue. A Zn(2+)-binding site is contributed by Asp-95. The active-site Proton acceptor is the Glu-125. The Zn(2+) site is built by Glu-126, Glu-154, and His-339.

The protein belongs to the peptidase M20A family. DapE subfamily. As to quaternary structure, homodimer. It depends on Zn(2+) as a cofactor. The cofactor is Co(2+).

It catalyses the reaction N-succinyl-(2S,6S)-2,6-diaminopimelate + H2O = (2S,6S)-2,6-diaminopimelate + succinate. It participates in amino-acid biosynthesis; L-lysine biosynthesis via DAP pathway; LL-2,6-diaminopimelate from (S)-tetrahydrodipicolinate (succinylase route): step 3/3. Functionally, catalyzes the hydrolysis of N-succinyl-L,L-diaminopimelic acid (SDAP), forming succinate and LL-2,6-diaminopimelate (DAP), an intermediate involved in the bacterial biosynthesis of lysine and meso-diaminopimelic acid, an essential component of bacterial cell walls. This Campylobacter curvus (strain 525.92) protein is Succinyl-diaminopimelate desuccinylase.